The sequence spans 775 residues: Dipeptidyl peptidase 4 (775 aa).

The signal sequence occupies residues 1 to 15; the sequence is MKLLSLLMLAGIAQA. Residues N81, N111, N170, and N219 are each glycosylated (N-linked (GlcNAc...) asparagine). Active-site charge relay system residues include S613, D690, and H725.

Belongs to the peptidase S9B family.

The protein localises to the secreted. It carries out the reaction Release of an N-terminal dipeptide, Xaa-Yaa-|-Zaa-, from a polypeptide, preferentially when Yaa is Pro, provided Zaa is neither Pro nor hydroxyproline.. Functionally, extracellular dipeptidyl-peptidase which removes N-terminal dipeptides sequentially from polypeptides having unsubstituted N-termini provided that the penultimate residue is proline. Contributes to pathogenicity. In Trichophyton tonsurans (Scalp ringworm fungus), this protein is Dipeptidyl peptidase 4 (DPP4).